The primary structure comprises 626 residues: DNA mismatch repair protein MutL (626 aa).

It belongs to the DNA mismatch repair MutL/HexB family.

This protein is involved in the repair of mismatches in DNA. It is required for dam-dependent methyl-directed DNA mismatch repair. May act as a 'molecular matchmaker', a protein that promotes the formation of a stable complex between two or more DNA-binding proteins in an ATP-dependent manner without itself being part of a final effector complex. In Pelodictyon phaeoclathratiforme (strain DSM 5477 / BU-1), this protein is DNA mismatch repair protein MutL.